The following is an 83-amino-acid chain: U5-theraphotoxin-Hs1b 1 (83 aa).

An N-terminal signal peptide occupies residues 1–21 (MKTSMFLTLTGLVLLFVVCYA). Positions 22 to 49 (SESEEKEFPKELLSSIFAADSDFKEEER) are excised as a propeptide. 3 cysteine pairs are disulfide-bonded: cysteine 51-cysteine 63, cysteine 56-cysteine 68, and cysteine 62-cysteine 75.

It belongs to the neurotoxin 10 (Hwtx-1) family. 51 (Hntx-8) subfamily. Hntx-8 sub-subfamily. In terms of tissue distribution, expressed by the venom gland.

The protein localises to the secreted. Functionally, weakly inhibits 5HT3A receptors and Kv1.3/KCNA3 voltage-gated potassium channels. Agglutinates erythrocytes. The protein is U5-theraphotoxin-Hs1b 1 of Cyriopagopus schmidti (Chinese bird spider).